The primary structure comprises 815 residues: uncharacterized protein (815 aa).

Disordered regions lie at residues 123-183, 249-274, 592-668, and 765-815; these read QSNT…QPST, NVNNNKNNKNQNNNNNNNIENSNNTN, IKQN…NLNS, and NNEE…EEIK. Polar residues-rich tracts occupy residues 135–154 and 174–183; these read SIITNSDSPRLIVSDTTSTT and DSITVLQPST. Residues 595–611 show a composition bias toward low complexity; sequence NGSSSSNNNSKLSSTNS. Residues 612-639 show a composition bias toward polar residues; sequence GQTSDNPINSSNGGQSIKKQGSNLSLNR. Positions 640–668 are enriched in low complexity; that stretch reads QQSSTKLNNQSNNNNNNNANTTNQNNLNS. Over residues 765-782 the composition is skewed to basic and acidic residues; sequence NNEEHNNNNKENNNENNK. The segment covering 783–809 has biased composition (low complexity); that stretch reads ENINNNNNIINNNNDNNCNENNNNCNE.

This is an uncharacterized protein from Dictyostelium discoideum (Social amoeba).